Here is a 208-residue protein sequence, read N- to C-terminus: Imidazole glycerol phosphate synthase subunit HisH (208 aa).

Residues 1–206 (MFAIVDYDTG…KEMVSANDFS (206 aa)) form the Glutamine amidotransferase type-1 domain. Cys79 functions as the Nucleophile in the catalytic mechanism. Catalysis depends on residues His181 and Glu183.

In terms of assembly, heterodimer of HisH and HisF.

Its subcellular location is the cytoplasm. It carries out the reaction 5-[(5-phospho-1-deoxy-D-ribulos-1-ylimino)methylamino]-1-(5-phospho-beta-D-ribosyl)imidazole-4-carboxamide + L-glutamine = D-erythro-1-(imidazol-4-yl)glycerol 3-phosphate + 5-amino-1-(5-phospho-beta-D-ribosyl)imidazole-4-carboxamide + L-glutamate + H(+). The enzyme catalyses L-glutamine + H2O = L-glutamate + NH4(+). It functions in the pathway amino-acid biosynthesis; L-histidine biosynthesis; L-histidine from 5-phospho-alpha-D-ribose 1-diphosphate: step 5/9. In terms of biological role, IGPS catalyzes the conversion of PRFAR and glutamine to IGP, AICAR and glutamate. The HisH subunit catalyzes the hydrolysis of glutamine to glutamate and ammonia as part of the synthesis of IGP and AICAR. The resulting ammonia molecule is channeled to the active site of HisF. This is Imidazole glycerol phosphate synthase subunit HisH from Lactiplantibacillus plantarum (strain ATCC BAA-793 / NCIMB 8826 / WCFS1) (Lactobacillus plantarum).